The following is a 222-amino-acid chain: Apoptosis regulator OPG045 (222 aa).

This sequence belongs to the orthopoxvirus OPG045 family. Homodimer. Interacts with host pro-apoptotic protein BCL2L11 (via BH3 domain). Interacts with host NLRP1. Interacts with host BAK.

It localises to the host mitochondrion outer membrane. It is found in the host cytoplasm. Plays a role in evading host innate immune response by inhibiting host inflammasome activation. Interacts with and inhibits NLR-mediated interleukin-1 beta/IL1B production in infected cells. At the host mitochondria outer membrane, interacts with the BH3 domain of host BAK and prevents BAK from binding active BAX. In turn, host apoptosis is inhibited. The polypeptide is Apoptosis regulator OPG045 (OPG045) (Homo sapiens (Human)).